The primary structure comprises 123 residues: WAP four-disulfide core domain protein 5 (123 aa).

Positions 1–24 (MRIQSLLLLGALLAVGSQPPAAFG) are cleaved as a signal peptide. 2 consecutive WAP domains span residues 27–73 (KGEK…CVPR) and 74–121 (VSVK…RDPV). 8 disulfides stabilise this stretch: C34/C62, C41/C66, C49/C61, C55/C70, C81/C109, C88/C113, C96/C108, and C102/C117.

It localises to the secreted. Putative acid-stable proteinase inhibitor. In Aotus nancymaae (Ma's night monkey), this protein is WAP four-disulfide core domain protein 5 (WFDC5).